We begin with the raw amino-acid sequence, 401 residues long: Deacetoxyvindoline 4-hydroxylase (401 aa).

One can recognise a Fe2OG dioxygenase domain in the interval 242-345 (CAEGLILLGH…SVAVAFGIKT (104 aa)). Positions 268, 270, and 324 each coordinate Fe cation. A 2-oxoglutarate-binding site is contributed by Arg334.

The protein belongs to the iron/ascorbate-dependent oxidoreductase family. Monomer. The cofactor is Fe cation. It depends on L-ascorbate as a cofactor. In terms of tissue distribution, highest levels in leaves, lower levels in stems and fruits. Not expressed in flowers and roots.

The protein localises to the cytoplasm. It is found in the nucleus. The catalysed reaction is deacetoxyvindoline + 2-oxoglutarate + O2 = 4-O-deacetylvindoline + succinate + CO2. It functions in the pathway alkaloid biosynthesis; vindoline biosynthesis. In terms of biological role, catalyzes the C4-hydroxylation of desacetoxyvindoline. The sequence is that of Deacetoxyvindoline 4-hydroxylase from Catharanthus roseus (Madagascar periwinkle).